The following is a 339-amino-acid chain: Cathepsin L-like peptidase (339 aa).

The N-terminal stretch at 1–16 (MKILILLVAFVAAANA) is a signal peptide. Positions 17–121 (VSLYELVKEE…VTFIEPANVE (105 aa)) are cleaved as a propeptide — activation peptide. N-linked (GlcNAc...) asparagine glycosylation is present at asparagine 95. Cystine bridges form between cysteine 143/cysteine 186, cysteine 177/cysteine 219, and cysteine 278/cysteine 328. The active site involves cysteine 146. Residues histidine 285 and asparagine 306 contribute to the active site.

This sequence belongs to the peptidase C1 family. As to quaternary structure, dimer of a heavy and a light chain linked by disulfide bonds. Interacts with cystatin; the interaction results in inhibition of cathepsin L-like peptidase activity. As to expression, salivary gland. Midgut.

It catalyses the reaction Specificity close to that of papain. As compared to cathepsin B, cathepsin L exhibits higher activity toward protein substrates, but has little activity on Z-Arg-Arg-NHMec, and no peptidyl-dipeptidase activity.. Its activity is regulated as follows. More active in the presence of a reducing agent DTT. Functionally, proteinase exhibiting preference for Leu, Val and Phe residues at the P2 position. The polypeptide is Cathepsin L-like peptidase (Aedes aegypti (Yellowfever mosquito)).